Reading from the N-terminus, the 222-residue chain is MIF4G domain-containing protein B (222 aa).

The region spanning 3-205 is the MIF4G domain; that stretch reads NSSKEDYKIQ…LEILEFRAGG (203 aa).

Belongs to the MIF4GD family. Interacts with eif4g1, eif4g2 and slbp; probably tethered by SLBP to the 3'-end of mRNAs ending with the histone stem-loop, it also interacts with eif4g1 which is bound to their 5'-end.

Its subcellular location is the cytoplasm. The protein resides in the nucleus. Its function is as follows. Functions in replication-dependent translation of histone mRNAs which differ from other eukaryotic mRNAs in that they do not end with a poly-A tail but a stem-loop. May participate in circularizing those mRNAs specifically enhancing their translation. This is MIF4G domain-containing protein B (mif4gdb) from Danio rerio (Zebrafish).